The sequence spans 84 residues: Large ribosomal subunit protein bL27 (84 aa).

It belongs to the bacterial ribosomal protein bL27 family.

This is Large ribosomal subunit protein bL27 from Campylobacter jejuni subsp. jejuni serotype O:6 (strain 81116 / NCTC 11828).